Here is a 497-residue protein sequence, read N- to C-terminus: MSDVVLEIKNLSKSFGKNKVLDGINLTVRQGSVMGLMGENGAGKSTMMKCLFGIYTRDEGAISLLNKSIEFKNPKEALESGVAMVHQELNLCLDRTVTDNLFLGRYPTNFGIVDEIKMFESASSLFSSLNMNVNPKTIMRTMSVSQRQMVEIAKAVSYNAKLIVLDEPTSSLTEREVKKLFSIIRALQKKGVSFIYISHKMDEVFEVCDEVAVLRDGKMILSKPVAGTNMNEIISAMVGRSLDKRFPDVDNVPGEDFLKIENLKTKYAPVLEDISFTVRKGEILGLYGLVGAGRSELLEALFGIRTIESGSISINDKYLKFKSSKEAMAHGFALLTEERKLNGMFGKDTIEFNTVITNLNNYKTIGVLSKRKIREAANREIETMRTRCLSADQGISALSGGNQQKVIIGKWLERSPDVFLMDEPTRGIDVGAKYEIYQLIIKMAKEGKTIIVVSSEMPEILGITNRIAVMSNRRLAGIVNTKETDQETLLRLSAKYL.

2 consecutive ABC transporter domains span residues 6 to 241 (LEIK…VGRS) and 252 to 497 (VPGE…AKYL). An ATP-binding site is contributed by 38–45 (GENGAGKS).

Belongs to the ABC transporter superfamily. Galactose/methyl galactoside importer (TC 3.A.1.2.3) family. In terms of assembly, the complex is composed of one ATP-binding protein (MglA), two transmembrane proteins (MglC) and a solute-binding protein (MglB).

Its subcellular location is the cell inner membrane. The catalysed reaction is D-galactose(out) + ATP + H2O = D-galactose(in) + ADP + phosphate + H(+). It carries out the reaction methyl beta-D-galactoside(out) + ATP + H2O = methyl beta-D-galactoside(in) + ADP + phosphate + H(+). In terms of biological role, part of the ABC transporter complex MglABC involved in galactose/methyl galactoside import. Responsible for energy coupling to the transport system. This is Galactose/methyl galactoside import ATP-binding protein MglA from Treponema denticola (strain ATCC 35405 / DSM 14222 / CIP 103919 / JCM 8153 / KCTC 15104).